Consider the following 172-residue polypeptide: Large ribosomal subunit protein uL10 (172 aa).

It belongs to the universal ribosomal protein uL10 family. In terms of assembly, part of the ribosomal stalk of the 50S ribosomal subunit. The N-terminus interacts with L11 and the large rRNA to form the base of the stalk. The C-terminus forms an elongated spine to which L12 dimers bind in a sequential fashion forming a multimeric L10(L12)X complex.

In terms of biological role, forms part of the ribosomal stalk, playing a central role in the interaction of the ribosome with GTP-bound translation factors. The polypeptide is Large ribosomal subunit protein uL10 (Rhodospirillum centenum (strain ATCC 51521 / SW)).